Consider the following 198-residue polypeptide: NAD(P)H dehydrogenase (quinone) (198 aa).

In terms of domain architecture, Flavodoxin-like spans 4 to 189; that stretch reads ILVLYYSMYG…AIARYQGEHV (186 aa). Residues 10-15 and 78-80 each bind FMN; these read SMYGHI and TRF. An NAD(+)-binding site is contributed by Y12. Residue W98 participates in substrate binding. FMN contacts are provided by residues 113 to 118 and H133; that span reads STGTGG.

The protein belongs to the WrbA family. It depends on FMN as a cofactor.

The enzyme catalyses a quinone + NADH + H(+) = a quinol + NAD(+). The catalysed reaction is a quinone + NADPH + H(+) = a quinol + NADP(+). The sequence is that of NAD(P)H dehydrogenase (quinone) from Klebsiella pneumoniae (strain 342).